A 348-amino-acid chain; its full sequence is Putative S-adenosyl-L-methionine-dependent methyltransferase Mb3432 (348 aa).

S-adenosyl-L-methionine is bound by residues D171 and 200-201 (DL).

This sequence belongs to the UPF0677 family.

In terms of biological role, exhibits S-adenosyl-L-methionine-dependent methyltransferase activity. This chain is Putative S-adenosyl-L-methionine-dependent methyltransferase Mb3432, found in Mycobacterium bovis (strain ATCC BAA-935 / AF2122/97).